Consider the following 134-residue polypeptide: Transcription antitermination protein NusB (134 aa).

Belongs to the NusB family.

Its function is as follows. Involved in transcription antitermination. Required for transcription of ribosomal RNA (rRNA) genes. Binds specifically to the boxA antiterminator sequence of the ribosomal RNA (rrn) operons. The protein is Transcription antitermination protein NusB of Shewanella baltica (strain OS223).